The following is an 82-amino-acid chain: Diphthamide biosynthesis protein 3 (82 aa).

The DPH-type MB domain occupies phenylalanine 4–aspartate 60. Cysteine 26, cysteine 28, cysteine 48, and cysteine 51 together coordinate Fe cation.

Belongs to the DPH3 family. Component of the 2-(3-amino-3-carboxypropyl)histidine synthase complex composed of DPH1, DPH2, DPH3 and a NADH-dependent reductase. Interacts with SERGEF. It depends on Fe(2+) as a cofactor. In terms of tissue distribution, widely expressed with highest levels in heart, liver, kidney and testis.

The protein resides in the cytoplasm. Its subcellular location is the nucleus. The enzyme catalyses [3Fe-4S](1+)-[protein] + Fe(2+)-[Dph3] = [3Fe-4S](0)-[protein] + Fe(3+)-[Dph3]. The catalysed reaction is 2 [3Fe-4S](0)-[protein] + 2 Fe(2+)-[Dph3] + NADH = 2 [4Fe-4S](1+)-[protein] + 2 [Dph3] + NAD(+) + H(+). It participates in protein modification; peptidyl-diphthamide biosynthesis. Its function is as follows. Required for the first step of diphthamide biosynthesis, a post-translational modification of histidine which occurs in elongation factor 2. DPH1 and DPH2 transfer a 3-amino-3-carboxypropyl (ACP) group from S-adenosyl-L-methionine (SAM) to a histidine residue, the reaction is assisted by a reduction system comprising DPH3 and a NADH-dependent reductase. Acts as an electron donor to reduce the Fe-S cluster in DPH1-DPH2 keeping the [4Fe-4S] clusters in the active and reduced state. Restores iron to DPH1-DPH2 iron-sulfur clusters which have degraded from [4Fe-4S] to [3Fe-4S] by donating an iron atom to reform [4Fe-4S] clusters, in a manner dependent on the presence of elongation factor 2 and SAM. Associates with the elongator complex and is required for tRNA Wobble base modifications mediated by the elongator complex. The elongator complex is required for multiple tRNA modifications, including mcm5U (5-methoxycarbonylmethyl uridine), mcm5s 2U (5-methoxycarbonylmethyl-2-thiouridine), and ncm5U (5-carbamoylmethyl uridine). The polypeptide is Diphthamide biosynthesis protein 3 (Mus musculus (Mouse)).